The primary structure comprises 909 residues: Cutinase transcription factor 1 alpha (909 aa).

The interval M1–S51 is disordered. Over residues P12 to P30 the composition is skewed to low complexity. The zn(2)-C6 fungal-type DNA-binding region spans C61–C90. Disordered regions lie at residues P95–A159, A651–V757, and L841–A878. Residues K110 to G119 are compositionally biased toward basic and acidic residues. A compositionally biased stretch (polar residues) spans V142–E156. Basic and acidic residues predominate over residues Q669–E683. Polar residues-rich tracts occupy residues P704–M717, G737–F755, and S865–A878.

The protein resides in the nucleus. This Fusarium vanettenii (Neocosmospora pisi) protein is Cutinase transcription factor 1 alpha (CTF1-ALPHA).